The following is a 148-amino-acid chain: Deoxyuridine 5'-triphosphate nucleotidohydrolase (148 aa).

Substrate-binding positions include 67-69 (RSG), asparagine 80, 84-86 (LID), and methionine 94.

It belongs to the dUTPase family. Mg(2+) serves as cofactor.

It catalyses the reaction dUTP + H2O = dUMP + diphosphate + H(+). It functions in the pathway pyrimidine metabolism; dUMP biosynthesis; dUMP from dCTP (dUTP route): step 2/2. Functionally, this enzyme is involved in nucleotide metabolism: it produces dUMP, the immediate precursor of thymidine nucleotides and it decreases the intracellular concentration of dUTP so that uracil cannot be incorporated into DNA. The chain is Deoxyuridine 5'-triphosphate nucleotidohydrolase from Burkholderia ambifaria (strain ATCC BAA-244 / DSM 16087 / CCUG 44356 / LMG 19182 / AMMD) (Burkholderia cepacia (strain AMMD)).